The following is a 145-amino-acid chain: Ribosome-binding factor A (145 aa).

The segment at 126-145 (RDLDTETDAEAGSETTKEED) is disordered. A compositionally biased stretch (acidic residues) spans 130–145 (TETDAEAGSETTKEED).

The protein belongs to the RbfA family. Monomer. Binds 30S ribosomal subunits, but not 50S ribosomal subunits or 70S ribosomes.

The protein resides in the cytoplasm. Its function is as follows. One of several proteins that assist in the late maturation steps of the functional core of the 30S ribosomal subunit. Associates with free 30S ribosomal subunits (but not with 30S subunits that are part of 70S ribosomes or polysomes). Required for efficient processing of 16S rRNA. May interact with the 5'-terminal helix region of 16S rRNA. This chain is Ribosome-binding factor A, found in Azorhizobium caulinodans (strain ATCC 43989 / DSM 5975 / JCM 20966 / LMG 6465 / NBRC 14845 / NCIMB 13405 / ORS 571).